The sequence spans 1068 residues: Sucrose-phosphate synthase (1068 aa).

2 disordered regions span residues 18–47 (HTSS…GAHM) and 118–139 (KEQE…SEGE). Residues 23 to 32 (GAGGGGGGGD) are compositionally biased toward gly residues. The span at 118 to 128 (KEQEQVRREAT) shows a compositional bias: basic and acidic residues.

It belongs to the glycosyltransferase 1 family. In terms of assembly, homodimer or homotetramer.

It carries out the reaction beta-D-fructose 6-phosphate + UDP-alpha-D-glucose = sucrose 6(F)-phosphate + UDP + H(+). It participates in glycan biosynthesis; sucrose biosynthesis; sucrose from D-fructose 6-phosphate and UDP-alpha-D-glucose: step 1/2. With respect to regulation, activity is regulated by phosphorylation and moderated by concentration of metabolites and light. In terms of biological role, plays a role in photosynthetic sucrose synthesis by catalyzing the rate-limiting step of sucrose biosynthesis from UDP-glucose and fructose- 6-phosphate. Involved in the regulation of carbon partitioning in the leaves of plants. May regulate the synthesis of sucrose and therefore play a major role as a limiting factor in the export of photoassimilates out of the leaf. Plays a role for sucrose availability that is essential for plant growth and fiber elongation. This chain is Sucrose-phosphate synthase, found in Zea mays (Maize).